The chain runs to 406 residues: MARAFLFVLDSFGVGGAPDAAAYGDEGADTLGHIAEFCAAGAGDRAGLRSGPLSLPNMSELGLMHIARAASGQFPAGMPLPEKVYGVYGTANEISRGKDTPSGHWEIAGTPVNFDWGYFPTEGDAFPPELIEALCRAGDVPGILGNCHASGTEIIARLGEEHIRTGKPICYTSSDSVFQVAAQEAHFGLDRLLTFCRIARGLLDPYNIGRIIARPFIGQSASTFQRTGNRRDFSVLPPEPTLLDRLLQHGRHVHAVGKIGDIFAHQGISRVIKATGNEALMDASLSAIDAAEDGDLVFTNFVDFDMNYGHRRDVPGYAAALEAFDARLPEVHKKLKPGDLVVLTADHGCDPTWRGTDHTRERVPIIAFGPGIRSRSIGVRRTYADIGESIARHLGIPAGPHGRSFL.

6 residues coordinate Mn(2+): aspartate 10, aspartate 305, histidine 310, aspartate 346, histidine 347, and histidine 358.

Belongs to the phosphopentomutase family. Mn(2+) is required as a cofactor.

It localises to the cytoplasm. The catalysed reaction is 2-deoxy-alpha-D-ribose 1-phosphate = 2-deoxy-D-ribose 5-phosphate. It carries out the reaction alpha-D-ribose 1-phosphate = D-ribose 5-phosphate. It functions in the pathway carbohydrate degradation; 2-deoxy-D-ribose 1-phosphate degradation; D-glyceraldehyde 3-phosphate and acetaldehyde from 2-deoxy-alpha-D-ribose 1-phosphate: step 1/2. Its function is as follows. Isomerase that catalyzes the conversion of deoxy-ribose 1-phosphate (dRib-1-P) and ribose 1-phosphate (Rib-1-P) to deoxy-ribose 5-phosphate (dRib-5-P) and ribose 5-phosphate (Rib-5-P), respectively. The protein is Phosphopentomutase of Rhizobium etli (strain ATCC 51251 / DSM 11541 / JCM 21823 / NBRC 15573 / CFN 42).